Consider the following 295-residue polypeptide: Secreted frizzled-related protein 2 (295 aa).

A signal peptide spans 1–24 (MPRGPASLLLLVLASHCCLGSARG). The 121-residue stretch at 35 to 155 (YKRSNCKPIP…PQDNDLCIPL (121 aa)) folds into the FZ domain. 8 disulfide bridges follow: C40-C103, C50-C96, C87-C125, C114-C152, C118-C142, C172-C245, C175-C247, and C190-C295. The region spanning 172–295 (CEACKTKNED…ISRSIRKLQC (124 aa)) is the NTR domain.

The protein belongs to the secreted frizzled-related protein (sFRP) family. In terms of tissue distribution, highly expressed in the eye. Weaker expression in heart and lung.

The protein resides in the secreted. Soluble frizzled-related proteins (sFRPS) function as modulators of Wnt signaling through direct interaction with Wnts. They have a role in regulating cell growth and differentiation in specific cell types. SFRP2 may be important for eye retinal development and for myogenesis. This Mus musculus (Mouse) protein is Secreted frizzled-related protein 2.